We begin with the raw amino-acid sequence, 1317 residues long: MFNKSVNSGFTFGNQNTSTPTSTPAQPSSSLQFPQKSTGLFGNVNVNANTSTPSPSGGLFNANSNANSISQQPANNSLFGNKPAQPSGGLFGATNNTTSKSAGSLFGNNNATANSTGSTGLFSGSNNIASSTQNGGLFGNSNNNNITSTTQNGGLFGKPTTTPAGAGGLFGNSSSTNSTTGLFGSNNTQSSTGIFGQKPGASTTGGLFGNNGASFPRSGETTGTMSTNPYGINISNVPMAVADMPRSITSSLSDVNGKSDAEPKPIENRRTYSFSSSVSGNAPLPLASQSSLVSRLSTRLKATQKSTSPNEIFSPSYSKPWLNGAGSAPLVDDFFSSKMTSLAPNENSIFPQNGFNFLSSQRADLTELRKLKIDSNRSAAKKLKLLSGTPAITKKHMQDEQDSSENEPIANADSVTNIDRKENRDNNLDNTYLNGKEQSNNLNKQDGENTLQHEKSSSFGYWCSPSPEQLERLSLKQLAAVSNFVIGRRGYGCITFQHDVDLTAFTKSFREELFGKIVIFRSSKTVEVYPDEATKPMIGHGLNVPAIITLENVYPVDKKTKKPMKDTTKFAEFQVFDRKLRSMREMNYISYNPFGGTWTFKVNHFSIWGLVNEEDAEIDEDDLSKQEDGGEQPLRKVRTLAQSKPSDKEVILKTDGTFGTLSGKDDSIVEEKAYEPDLSDADFEGIEASPKLDVSKDWVEQLILAGSSLRSVFATSKEFDGPCQNEIDLLFSECNDEIDNAKLIMKERRFTASYTFAKFSTGSMLLTKDIVGKSGVSIKRLPTELQRKFLFDDVYLDKEIEKVTIEARKSNPYPQISESSLLFKDALDYMEKTSSDYNLWKLSSILFDPVSYPYKTDNDQVKMALLKKERHCRLTSWIVSQIGPEIEEKIRNSSNEIEQIFLYLLLNDVVRASKLAIESKNGHLSVLISYLGSNDPRIRDLAELQLQKWSTGGCSIDKNISKIYKLLSGSPFEGLFSLKELESEFSWLCLLNLTLCYGQIDEYSLESLVQSHLDKFSLPYDDPIGVIFQLYAANENTEKLYKEVRQRTNALDVQFCWYLIQTLRFNGTRVFSKETSDEATFAFAAQLEFAQLHGHSLFVSCFLNDDKAAEDTIKRLVMREITLLRASTNDHILNRLKIPSQLIFNAQALKDRYEGNYLSEVQNLLLGSSYDLAEMAIVTSLGPRLLLSNNPVQNNELKTLREILNEFPDSERDKWSVSINVFEVYLKLVLDNVETQETIDSLISGMKIFYDQYKHCREVAACCNVMSQEIVSKILEKNNPSIGDSKAKLLELPLGQPEKAYLRGEFAQDLMKCTYKI.

Residues methionine 1 to asparagine 16 are compositionally biased toward polar residues. A disordered region spans residues methionine 1–lysine 36. The FG 1 repeat unit spans residues phenylalanine 12 to glycine 13. Residues threonine 17–serine 30 are compositionally biased toward low complexity. The stretch at glycine 39–glycine 42 is one GLFG 1 repeat. One copy of the FG 2 repeat lies at phenylalanine 79–glycine 80. One copy of the GLFG 2 repeat lies at glycine 89–glycine 92. The FG 3 repeat unit spans residues phenylalanine 106–glycine 107. The tract at residues glutamine 133–glycine 165 is disordered. GLFG repeat units follow at residues glycine 136–glycine 139, glycine 154–glycine 157, glycine 168–glycine 171, and glycine 181–glycine 184. The segment covering glycine 139–alanine 164 has biased composition (low complexity). A GLFG 7; approximate repeat occupies glycine 193–glycine 196. The GLFG 8 repeat unit spans residues glycine 206–glycine 209. The tract at residues threonine 249–valine 278 is disordered. The segment covering glycine 257–arginine 270 has biased composition (basic and acidic residues). The residue at position 273 (serine 273) is a Phosphoserine. The Bipartite nuclear localization signal motif lies at arginine 369–leucine 385. Positions proline 390–threonine 450 are disordered. The tract at residues glutamine 398–serine 523 is required for autocatalytic cleavage. Serine 403, serine 404, and serine 414 each carry phosphoserine. Basic and acidic residues predominate over residues isoleucine 418 to asparagine 427. Residues leucine 428–lysine 444 show a composition bias toward polar residues. Positions serine 458–phenylalanine 605 constitute a Peptidase S59 domain. The interval glycine 460–histidine 604 is nucleoporin RNA-binding motif (NRM). 3 positions are modified to phosphoserine: serine 667, serine 679, and serine 689. At threonine 751 the chain carries Phosphothreonine.

This sequence belongs to the nucleoporin GLFG family. As to quaternary structure, component of the nuclear pore complex (NPC). NPC constitutes the exclusive means of nucleocytoplasmic transport. NPCs allow the passive diffusion of ions and small molecules and the active, nuclear transport receptor-mediated bidirectional transport of macromolecules such as proteins, RNAs, ribonucleoparticles (RNPs), and ribosomal subunits across the nuclear envelope. Due to its 8-fold rotational symmetry, all subunits are present with 8 copies or multiples thereof. NUP145C is part of the heptameric 0.5 MDa autoassembling NUP84 NPC subcomplex (NUP84, NUP85, NUP120, NUP133, NUP145C, SEC13 and SEH1). NUP145N may bind homomeric RNA and interacts through its FG repeats with karyopherins. Interacts with MLP1 and MLP2. NUP145 is autocatalytically cleaved in NUP145N and NUP145C.

Its subcellular location is the nucleus. It is found in the nuclear pore complex. The protein resides in the nucleus membrane. Functionally, functions as a component of the nuclear pore complex (NPC). NPC components, collectively referred to as nucleoporins (NUPs), can play the role of both NPC structural components and of docking or interaction partners for transiently associated nuclear transport factors. Active directional transport is assured by both, a Phe-Gly (FG) repeat affinity gradient for these transport factors across the NPC and a transport cofactor concentration gradient across the nuclear envelope (GSP1 and GSP2 GTPases associated predominantly with GTP in the nucleus, with GDP in the cytoplasm). NUP145 is autocatalytically cleaved in vivo in 2 polypeptides which assume different functions in the NPC. NUP145N as one of the FG repeat nucleoporins participates in karyopherin interactions and contains part of the autocatalytic cleavage activity. NUP145C as part of the NUP84 complex is involved in nuclear poly(A)+ RNA and tRNA export. It is also required for normal NPC distribution (probably through interactions with MLP1 and MLP2) and NPC assembly, as well as for normal nuclear envelope organization. This is Nucleoporin NUP145 (NUP145) from Saccharomyces cerevisiae (strain ATCC 204508 / S288c) (Baker's yeast).